The following is a 381-amino-acid chain: L-lactate dehydrogenase (381 aa).

An FMN hydroxy acid dehydrogenase domain is found at 1 to 380 (MIISASTDYR…NRDSLAVSER (380 aa)). Tyr-24 provides a ligand contact to substrate. Ser-106 and Gln-127 together coordinate FMN. Tyr-129 serves as a coordination point for substrate. Position 155 (Thr-155) interacts with FMN. Arg-164 contributes to the substrate binding site. Lys-251 is a binding site for FMN. The active-site Proton acceptor is His-275. Substrate is bound at residue Arg-278. Residue 306–330 (DSGIRTGLDVVRMIALGADSVLLGR) coordinates FMN.

Belongs to the FMN-dependent alpha-hydroxy acid dehydrogenase family. It depends on FMN as a cofactor.

The protein resides in the cell inner membrane. It carries out the reaction (S)-lactate + A = pyruvate + AH2. Its function is as follows. Catalyzes the conversion of L-lactate to pyruvate. Is coupled to the respiratory chain. This Yersinia pseudotuberculosis serotype O:1b (strain IP 31758) protein is L-lactate dehydrogenase.